The primary structure comprises 619 residues: Keratin, type II cytoskeletal 1 (619 aa).

The head stretch occupies residues 1–180 (MSRHFSSRSG…DPEIQKVKTR (180 aa)). R12 is subject to Omega-N-methylarginine. Phosphoserine is present on residues S18 and S21. Residues 28–49 (QRRTTSSSVRHSGGGGGRFSGG) form a disordered region. The span at 39–49 (SGGGGGRFSGG) shows a compositional bias: gly residues. R45 is modified (omega-N-methylarginine). Residue S68 is modified to Phosphoserine. Positions 173 to 477 (EIQKVKTRER…ELMNTKLALD (305 aa)) form a coiled coil. Positions 181-216 (EREQIKSLNNQFASFIDKVRFLEQQNQVLQTKWELL) are coil 1A. In terms of domain architecture, IF rod spans 181–494 (EREQIKSLNN…TLLEGEESRM (314 aa)). A linker 1 region spans residues 217–235 (QQVDTSTRTHSLEPYFENY). The interval 236–327 (ISNLRRRVDQ…TLYQAELSQM (92 aa)) is coil 1B. The residue at position 277 (K277) is an N6,N6-dimethyllysine. Residues 328–351 (QTQISETNVILSMDNNRSLDLDSI) are linker 12. Residue S345 is modified to Phosphoserine. Positions 352–490 (ISEVKAQYEE…ATYRTLLEGE (139 aa)) are coil 2. The tract at residues 491–619 (ESRMSGECAP…VSTSYSRAVR (129 aa)) is tail. R519 and R575 each carry omega-N-methylarginine. Residues 559–619 (GGGGGGYGSS…VSTSYSRAVR (61 aa)) are disordered. Residues 573–595 (GHRGGSGGGSRSGGSSGGRGSSS) show a composition bias toward gly residues. Low complexity predominate over residues 596-606 (GGIKTSSGSSS). Polar residues predominate over residues 607–619 (VKFVSTSYSRAVR).

Belongs to the intermediate filament family. As to quaternary structure, heterotetramer of two type I and two type II keratins. Heterodimer with KRT10. Two heterodimers of KRT1 and KRT10 form a heterotetramer. Forms a heterodimer with KRT14; the interaction is more abundant in the absence of KRT5. Interacts with ITGB1 in the presence of RACK1 and SRC, and with RACK1. Interacts with C1QBP; the association represents a cell surface kininogen receptor. Interacts with EPPK1; interaction is dependent of higher-order structure of intermediate filament. Undergoes deimination of some arginine residues (citrullination).

The protein resides in the cell membrane. The protein localises to the cytoplasm. May regulate the activity of kinases such as PKC and SRC via binding to integrin beta-1 (ITB1) and the receptor of activated protein C kinase 1 (RACK1). In complex with C1QBP is a high affinity receptor for kininogen-1/HMWK. The protein is Keratin, type II cytoskeletal 1 of Canis lupus familiaris (Dog).